The sequence spans 370 residues: tRNA 2-selenouridine synthase (370 aa).

One can recognise a Rhodanese domain in the interval 12 to 136 (FLEDVPMMDT…MRNFLLDTTR (125 aa)). Catalysis depends on Cys95, which acts as the S-selanylcysteine intermediate.

This sequence belongs to the SelU family. As to quaternary structure, monomer.

It carries out the reaction 5-methylaminomethyl-2-thiouridine(34) in tRNA + selenophosphate + (2E)-geranyl diphosphate + H2O + H(+) = 5-methylaminomethyl-2-selenouridine(34) in tRNA + (2E)-thiogeraniol + phosphate + diphosphate. It catalyses the reaction 5-methylaminomethyl-2-thiouridine(34) in tRNA + (2E)-geranyl diphosphate = 5-methylaminomethyl-S-(2E)-geranyl-thiouridine(34) in tRNA + diphosphate. The enzyme catalyses 5-methylaminomethyl-S-(2E)-geranyl-thiouridine(34) in tRNA + selenophosphate + H(+) = 5-methylaminomethyl-2-(Se-phospho)selenouridine(34) in tRNA + (2E)-thiogeraniol. The catalysed reaction is 5-methylaminomethyl-2-(Se-phospho)selenouridine(34) in tRNA + H2O = 5-methylaminomethyl-2-selenouridine(34) in tRNA + phosphate. Involved in the post-transcriptional modification of the uridine at the wobble position (U34) of tRNA(Lys), tRNA(Glu) and tRNA(Gln). Catalyzes the conversion of 2-thiouridine (S2U-RNA) to 2-selenouridine (Se2U-RNA). Acts in a two-step process involving geranylation of 2-thiouridine (S2U) to S-geranyl-2-thiouridine (geS2U) and subsequent selenation of the latter derivative to 2-selenouridine (Se2U) in the tRNA chain. The sequence is that of tRNA 2-selenouridine synthase from Azotobacter vinelandii (strain DJ / ATCC BAA-1303).